A 395-amino-acid polypeptide reads, in one-letter code: uncharacterized protein (395 aa).

Residues 182–238 (KKLEDILSTIAEIEDSIELEKILSLDQFLKSKLSNIKITNNQIDEAKAEFKEMFNKK) are a coiled coil.

This is an uncharacterized protein from Acanthamoeba polyphaga (Amoeba).